Consider the following 227-residue polypeptide: E3 ubiquitin-protein ligase ZNRF1 (227 aa).

Positions 1–38 are disordered; it reads MGGKQSTAARSRGPFPGVSTDDSAVPPPGGAPHFGHYR. The N-myristoyl glycine moiety is linked to residue Gly-2. The tract at residues 2–10 is required for endosomal and lysosomal localization and myristoylation; the sequence is GGKQSTAAR. Ser-50, Ser-52, and Ser-53 each carry phosphoserine. The segment at 77–105 is disordered; sequence RGAGDAERAPGSGGSASDSTYAHGNGYQE. Position 103 is a phosphotyrosine (Tyr-103). Residue Ser-123 is modified to Phosphoserine. The segment at 184–225 adopts an RING-type; atypical zinc-finger fold; that stretch reads CVICLEELLQGDTIARLPCLCIYHKSCIDSWFEVNRSCPEHP.

In terms of assembly, interacts with AKT1, GLUL and TUBB2A. Interacts with ZNRF2. Interacts (via its RING domain) with UBE2N. Interacts (when phosphorylated) with YWHAE. N-myristoylation targets ZNRF1 to intracellular membranes. Post-translationally, phosphorylated by SRC at Tyr-103; leading to 'Lys-63'-linked ubiquitination of TLR3, lysosomal trafficking and degradation.

It is found in the endosome. The protein localises to the lysosome. It localises to the membrane. Its subcellular location is the cytoplasmic vesicle. The protein resides in the secretory vesicle. It is found in the synaptic vesicle membrane. The enzyme catalyses S-ubiquitinyl-[E2 ubiquitin-conjugating enzyme]-L-cysteine + [acceptor protein]-L-lysine = [E2 ubiquitin-conjugating enzyme]-L-cysteine + N(6)-ubiquitinyl-[acceptor protein]-L-lysine.. Its pathway is protein modification; protein ubiquitination. E3 ubiquitin-protein ligase that plays a role in different processes including cell differentiation, receptor recycling or regulation of inflammation. Mediates the ubiquitination of AKT1 and GLUL, thereby playing a role in neuron cells differentiation. Plays a role in the establishment and maintenance of neuronal transmission and plasticity. Regulates Schwann cells differentiation by mediating ubiquitination of GLUL. Promotes neurodegeneration by mediating 'Lys-48'-linked polyubiquitination and subsequent degradation of AKT1 in axons: degradation of AKT1 prevents AKT1-mediated phosphorylation of GSK3B, leading to GSK3B activation and phosphorylation of DPYSL2/CRMP2 followed by destabilization of microtubule assembly in axons. Ubiquitinates the Na(+)/K(+) ATPase alpha-1 subunit/ATP1A1 and thereby influences its endocytosis and/or degradation. Controls ligand-induced EGFR signaling via mediating receptor ubiquitination and recruitment of the ESCRT machinery. Acts as a negative feedback mechanism controlling TLR3 trafficking by mediating TLR3 'Lys-63'-linked polyubiquitination to reduce type I IFN production. Modulates inflammation by promoting caveolin-1/CAV1 ubiquitination and degradation to regulate TLR4-activated immune response. The protein is E3 ubiquitin-protein ligase ZNRF1 (ZNRF1) of Bos taurus (Bovine).